Reading from the N-terminus, the 763-residue chain is Translation initiation factor IF-2 (763 aa).

The interval 52 to 178 (KQKKVQTSQN…KDEAIKHETK (127 aa)) is disordered. A compositionally biased stretch (basic and acidic residues) spans 65–82 (SNDENKKITNKNTEKTTE). Residues 86 to 96 (TVDSNKQNNSN) are compositionally biased toward polar residues. Composition is skewed to basic and acidic residues over residues 105-116 (RNNDEESVSHFD) and 123-135 (KSEMNEKRDLNDK). The segment covering 136 to 145 (KKNKNFKNTK) has biased composition (basic residues). Residues 146–161 (NKNSNNNKNSKNNKNN) show a composition bias toward low complexity. Positions 162–178 (KNNDHNRKDEAIKHETK) are enriched in basic and acidic residues. The tr-type G domain occupies 265-434 (ERPPVITVMG…LMVAEMEELK (170 aa)). Residues 274–281 (GHVDHGKT) are G1. 274–281 (GHVDHGKT) is a binding site for GTP. The tract at residues 299–303 (GITQH) is G2. Residues 320 to 323 (DTPG) are G3. Residues 320 to 324 (DTPGH) and 374 to 377 (NKID) contribute to the GTP site. A G4 region spans residues 374–377 (NKID). A G5 region spans residues 410-412 (SAR).

This sequence belongs to the TRAFAC class translation factor GTPase superfamily. Classic translation factor GTPase family. IF-2 subfamily.

The protein resides in the cytoplasm. Its function is as follows. One of the essential components for the initiation of protein synthesis. Protects formylmethionyl-tRNA from spontaneous hydrolysis and promotes its binding to the 30S ribosomal subunits. Also involved in the hydrolysis of GTP during the formation of the 70S ribosomal complex. This is Translation initiation factor IF-2 from Finegoldia magna (strain ATCC 29328 / DSM 20472 / WAL 2508) (Peptostreptococcus magnus).